We begin with the raw amino-acid sequence, 474 residues long: uncharacterized protein (474 aa).

Helical transmembrane passes span 17 to 39 (ILGGIIQIIGIFTLVPCIVSVYY), 44 to 61 (FLNFLIPGLFFSIFGFVL), 81 to 103 (LAWLIASFIGAIPLYLSIDYFSY), 144 to 166 (GVGILVLSALVLARSGTVAYLLY), 186 to 208 (IIWIYILYTILGVLLLYLSGLSF), 239 to 256 (IVMIGIMMVGGVMSFSIH), 268 to 286 (IQTKYALIVTAFISIIISI), 319 to 341 (LSLFLIIFLMLIGGGAGTTTGGV), 385 to 407 (AFVVFFLYCLSSFLTALIFIALG), and 444 to 466 (IIAMWIGRLEIIPVLVLFATLYF).

Belongs to the TrkH potassium transport family.

It is found in the cell membrane. This is an uncharacterized protein from Methanocaldococcus jannaschii (strain ATCC 43067 / DSM 2661 / JAL-1 / JCM 10045 / NBRC 100440) (Methanococcus jannaschii).